Consider the following 514-residue polypeptide: Glucose-6-phosphate 1-dehydrogenase 2 (514 aa).

Arginine 69 and lysine 176 together coordinate NADP(+). Residues histidine 206, lysine 210, glutamate 244, and aspartate 263 each coordinate substrate. Histidine 268 serves as the catalytic Proton acceptor. Residue lysine 366 coordinates substrate.

Belongs to the glucose-6-phosphate dehydrogenase family.

It catalyses the reaction D-glucose 6-phosphate + NADP(+) = 6-phospho-D-glucono-1,5-lactone + NADPH + H(+). The protein operates within carbohydrate degradation; pentose phosphate pathway; D-ribulose 5-phosphate from D-glucose 6-phosphate (oxidative stage): step 1/3. Its function is as follows. Catalyzes the oxidation of glucose 6-phosphate to 6-phosphogluconolactone. The protein is Glucose-6-phosphate 1-dehydrogenase 2 of Mycobacterium bovis (strain ATCC BAA-935 / AF2122/97).